Here is a 358-residue protein sequence, read N- to C-terminus: 3-isopropylmalate dehydrogenase (358 aa).

Substrate is bound by residues arginine 92, arginine 102, arginine 130, and aspartate 224. Residues aspartate 224, aspartate 248, and aspartate 252 each coordinate Mg(2+). 282–294 (GSAPDIAGQGIAN) lines the NAD(+) pocket.

Belongs to the isocitrate and isopropylmalate dehydrogenases family. LeuB type 1 subfamily. Homodimer. It depends on Mg(2+) as a cofactor. Mn(2+) serves as cofactor.

The protein localises to the cytoplasm. The catalysed reaction is (2R,3S)-3-isopropylmalate + NAD(+) = 4-methyl-2-oxopentanoate + CO2 + NADH. It functions in the pathway amino-acid biosynthesis; L-leucine biosynthesis; L-leucine from 3-methyl-2-oxobutanoate: step 3/4. Functionally, catalyzes the oxidation of 3-carboxy-2-hydroxy-4-methylpentanoate (3-isopropylmalate) to 3-carboxy-4-methyl-2-oxopentanoate. The product decarboxylates to 4-methyl-2 oxopentanoate. The protein is 3-isopropylmalate dehydrogenase of Bordetella parapertussis (strain 12822 / ATCC BAA-587 / NCTC 13253).